A 122-amino-acid chain; its full sequence is Large ribosomal subunit protein uL14 (122 aa).

Belongs to the universal ribosomal protein uL14 family. In terms of assembly, part of the 50S ribosomal subunit. Forms a cluster with proteins L3 and L19. In the 70S ribosome, L14 and L19 interact and together make contacts with the 16S rRNA in bridges B5 and B8.

Its function is as follows. Binds to 23S rRNA. Forms part of two intersubunit bridges in the 70S ribosome. The chain is Large ribosomal subunit protein uL14 from Lawsonia intracellularis (strain PHE/MN1-00).